The sequence spans 225 residues: Endo-1,4-beta-xylanase (225 aa).

Residues 1–31 (MVGFTPVALAALAATGALAFPAGNATELEKR) form the signal peptide. Glutamine 32 carries the post-translational modification Pyrrolidone carboxylic acid. In terms of domain architecture, GH11 spans 32-222 (QTTPNSEGWH…SSGYARITVA (191 aa)). The active-site Nucleophile is the glutamate 117. Cysteine 141 and cysteine 185 are oxidised to a cystine. The active-site Proton donor is the glutamate 209.

The enzyme catalyses Endohydrolysis of (1-&gt;4)-beta-D-xylosidic linkages in xylans.. It functions in the pathway glycan degradation; xylan degradation. The sequence is that of Endo-1,4-beta-xylanase (XYNA) from Thermomyces lanuginosus (Humicola lanuginosa).